The sequence spans 152 residues: Large-conductance mechanosensitive channel (152 aa).

Transmembrane regions (helical) follow at residues 14–34 (VIDL…VTSL) and 81–101 (GLFL…FIVI).

This sequence belongs to the MscL family. In terms of assembly, homopentamer.

The protein resides in the cell membrane. Functionally, channel that opens in response to stretch forces in the membrane lipid bilayer. May participate in the regulation of osmotic pressure changes within the cell. The chain is Large-conductance mechanosensitive channel from Clostridium perfringens (strain ATCC 13124 / DSM 756 / JCM 1290 / NCIMB 6125 / NCTC 8237 / Type A).